Reading from the N-terminus, the 413-residue chain is Phosphoribosylamine--glycine ligase (413 aa).

Residues 108–310 (KQLMDKYRIP…LMQLIIDLEN (203 aa)) form the ATP-grasp domain. Position 134-190 (134-190 (VETCDLPIVIKKDGLAAGKGVIIAFTREDALDGVKKIYQEEKGKVVFESYLEGEEFS)) interacts with ATP. Mg(2+) contacts are provided by E280 and N282.

Belongs to the GARS family. It depends on Mg(2+) as a cofactor. Mn(2+) is required as a cofactor.

The catalysed reaction is 5-phospho-beta-D-ribosylamine + glycine + ATP = N(1)-(5-phospho-beta-D-ribosyl)glycinamide + ADP + phosphate + H(+). Its pathway is purine metabolism; IMP biosynthesis via de novo pathway; N(1)-(5-phospho-D-ribosyl)glycinamide from 5-phospho-alpha-D-ribose 1-diphosphate: step 2/2. The polypeptide is Phosphoribosylamine--glycine ligase (Staphylococcus epidermidis (strain ATCC 12228 / FDA PCI 1200)).